The chain runs to 202 residues: Elongation factor Ts, chloroplastic (202 aa).

This sequence belongs to the EF-Ts family.

It localises to the plastid. The protein localises to the chloroplast. In terms of biological role, associates with the EF-Tu.GDP complex and induces the exchange of GDP to GTP. It remains bound to the aminoacyl-tRNA.EF-Tu.GTP complex up to the GTP hydrolysis stage on the ribosome. The protein is Elongation factor Ts, chloroplastic (tsf) of Phaeodactylum tricornutum (strain CCAP 1055/1).